Here is a 62-residue protein sequence, read N- to C-terminus: Synergistic-type venom protein C8S2, chain 2 (62 aa).

Disulfide bonds link Cys3–Cys24, Cys17–Cys42, and Cys46–Cys57.

It belongs to the three-finger toxin family. Short-chain subfamily. Aminergic toxin sub-subfamily. As to quaternary structure, heterodimer of C8S2 chain 1 (AC P01410) and chain 2; disulfide-linked. As to expression, expressed by the venom gland.

The protein resides in the secreted. Functionally, this protein shows a synergetic toxic effect in that it enhances the toxicity of other toxins. The protein is Synergistic-type venom protein C8S2, chain 2 of Dendroaspis angusticeps (Eastern green mamba).